The primary structure comprises 537 residues: Hexosyltransferase GAUT11 (537 aa).

The Cytoplasmic portion of the chain corresponds to 1-16 (MRRWPVDHRRRGRRRL). A helical; Signal-anchor for type II membrane protein membrane pass occupies residues 17–37 (SSWIWFLLGSFSVAGLVLFIV). Residues 38 to 537 (QHYHHQQDPS…HPYLQDCVTA (500 aa)) are Lumenal-facing. Residues asparagine 66, asparagine 247, asparagine 299, asparagine 403, asparagine 436, and asparagine 525 are each glycosylated (N-linked (GlcNAc...) asparagine).

This sequence belongs to the glycosyltransferase 8 family. Monomer. In terms of tissue distribution, expressed in roots, inflorescences, siliques, seeds, leaves and stems.

The protein resides in the golgi apparatus membrane. It catalyses the reaction [(1-&gt;4)-alpha-D-galacturonosyl](n) + UDP-alpha-D-galacturonate = [(1-&gt;4)-alpha-D-galacturonosyl](n+1) + UDP + H(+). It functions in the pathway glycan metabolism; pectin biosynthesis. In terms of biological role, glycosyltransferase involved in pectin and/or xylans biosynthesis in cell walls. Required for the biosynthesis of pectin in seed coat epidermal (SCE) cells. Collaboratively with MUCI70, essential for the accumulation of seed mucilage, a gelatinous wall rich in unbranched rhamnogalacturonan I (RG I), and for shaping the surface morphology of seeds. Catalyzes homogalacturonan (HG) elongation by acting as an HG alpha-1,4 galacturonic acid transferase. The protein is Hexosyltransferase GAUT11 of Arabidopsis thaliana (Mouse-ear cress).